A 315-amino-acid chain; its full sequence is Protoheme IX farnesyltransferase (315 aa).

Transmembrane regions (helical) follow at residues 38–58, 62–82, 111–131, 132–152, 159–179, 184–204, 233–253, 255–275, and 293–313; these read IIELLLITTVPVMFLAEQGVP, LVLLTCVGGYLSAGGANALNM, LVFGITLAIVSTLLFGFTVNW, LSAWLSLGALLFYVVVYTMIL, NIVWGGIAGCLPVLIGWSAVT, WAPVILFGVMFFWTPPHYWPL, IVIYSWVMVVVSLLLQPLGYT, WFYTAVALAAGGMWLWEAHGL, and LFHWSITYVSVLFLAIAVDPF.

The protein belongs to the UbiA prenyltransferase family. Protoheme IX farnesyltransferase subfamily.

The protein localises to the cell membrane. The catalysed reaction is heme b + (2E,6E)-farnesyl diphosphate + H2O = Fe(II)-heme o + diphosphate. The protein operates within porphyrin-containing compound metabolism; heme O biosynthesis; heme O from protoheme: step 1/1. Its function is as follows. Converts heme B (protoheme IX) to heme O by substitution of the vinyl group on carbon 2 of heme B porphyrin ring with a hydroxyethyl farnesyl side group. The protein is Protoheme IX farnesyltransferase of Streptomyces coelicolor (strain ATCC BAA-471 / A3(2) / M145).